Consider the following 491-residue polypeptide: Nucleoside transporter 1.1 (491 aa).

6 helical membrane passes run 27–47 (FYVYVVAFMCGVSMMMPVNAV), 82–102 (YNLIGIVTSLIMEPLTLLSWF), 109–129 (VRLLGGLVILIVEIIVLMVVP), 136–156 (AGAVATICCTGFIGGFGKSIF), 173–193 (STMMGGVGMSGVLTSLLQIIV), and 209–229 (KIYYGLDVGIQGMTFVALILL). Residues 260-273 (CHTDEHPTHDKEGR) are compositionally biased toward basic and acidic residues. Disordered stretches follow at residues 260–280 (CHTDEHPTHDKEGRNSSSGKE) and 290–309 (AAAKSEGPDAVEESSWPHEV). N-linked (GlcNAc...) asparagine glycosylation is present at Asn-274. Helical transmembrane passes span 333 to 353 (MFVACAFNFLITLFLFPGIAV), 361 to 381 (WFSTIAVFIFNVFDVLGRFSP), 395 to 415 (WIIVAASFARVIFVPLLLLHS), 427 to 447 (VMEVIFGFSNGYVGSMALVLG), and 460 to 480 (FVAGTLMGISILVGGTIGTVL).

Belongs to the SLC29A/ENT transporter (TC 2.A.57) family.

It is found in the membrane. It catalyses the reaction adenosine(in) + H(+)(in) = adenosine(out) + H(+)(out). The catalysed reaction is uridine(in) + H(+)(in) = uridine(out) + H(+)(out). Sodium-independent high affinity nucleoside:H(+) symporter; transports adenosine and uridine. Can transport cytidine and thymidine. This chain is Nucleoside transporter 1.1, found in Leishmania donovani.